The primary structure comprises 805 residues: Angiotensin-converting enzyme 2 (805 aa).

The first 17 residues, methionine 1 to alanine 17, serve as a signal peptide directing secretion. Residues glutamine 18–threonine 740 lie on the Extracellular side of the membrane. The Peptidase M2 domain maps to serine 19 to serine 607. Asparagine 53, asparagine 82, and asparagine 90 each carry an N-linked (GlcNAc...) asparagine glycan. Cysteines 133 and 141 form a disulfide. Chloride is bound at residue arginine 169. Arginine 273 contributes to the substrate binding site. Asparagine 299 carries an N-linked (GlcNAc...) asparagine glycan. Cysteine 344 and cysteine 361 are oxidised to a cystine. Residue histidine 345–proline 346 participates in substrate binding. A Zn(2+)-binding site is contributed by histidine 374. Glutamate 375 functions as the Proton acceptor in the catalytic mechanism. Histidine 378 and glutamate 402 together coordinate Zn(2+). A glycan (N-linked (GlcNAc...) asparagine) is linked at asparagine 432. Chloride contacts are provided by tryptophan 477 and lysine 481. Histidine 505 functions as the Proton donor in the catalytic mechanism. Tyrosine 515 contacts substrate. Residues cysteine 530 and cysteine 542 are joined by a disulfide bond. N-linked (GlcNAc...) asparagine glycans are attached at residues asparagine 546 and asparagine 601. The Collectrin-like domain maps to alanine 614–phenylalanine 805. Residues arginine 652 to lysine 659 are essential for cleavage by ADAM17. Asparagine 660 and asparagine 690 each carry an N-linked (GlcNAc...) asparagine glycan. The segment at arginine 697–glycine 716 is essential for cleavage by TMPRSS11D and TMPRSS2. The chain crosses the membrane as a helical span at residues isoleucine 741–isoleucine 761. Topologically, residues valine 762–phenylalanine 805 are cytoplasmic. The segment at lysine 771–phenylalanine 805 is disordered. The LIR motif lies at glutamate 778 to isoleucine 786. The residue at position 781 (tyrosine 781) is a Phosphotyrosine. Residues tyrosine 781–methionine 784 carry the Endocytic sorting signal motif. Residues tyrosine 781–aspartate 785 carry the SH2-binding motif. Serine 783 carries the post-translational modification Phosphoserine. Lysine 788 is covalently cross-linked (Glycyl lysine isopeptide (Lys-Gly) (interchain with G-Cter in ubiquitin)). A PTB motif is present at residues asparagine 792–phenylalanine 795. Residues alanine 793–phenylalanine 805 show a composition bias toward polar residues. The PDZ-binding signature appears at threonine 803–phenylalanine 805.

This sequence belongs to the peptidase M2 family. In terms of assembly, homodimer. Interacts with the catalytically active form of TMPRSS2. Interacts with SLC6A19; this interaction is essential for expression and function of SLC6A19 in intestine. Interacts with ITGA5:ITGB1. Probably interacts (via endocytic sorting signal motif) with AP2M1; the interaction is inhibited by phosphorylation of Tyr-781. Interacts (via PDZ-binding motif) with NHERF1 (via PDZ domains); the interaction may enhance ACE2 membrane residence. It depends on Zn(2+) as a cofactor. The cofactor is chloride. In terms of processing, glycosylated. Post-translationally, proteolytic cleavage by ADAM17 generates a secreted form. Also cleaved by serine proteases: TMPRSS2, TMPRSS11D and HPN/TMPRSS1. Phosphorylated. Phosphorylation at Tyr-781 probably inhibits interaction with AP2M1 and enables interactions with proteins containing SH2 domains. In terms of processing, ubiquitinated. Ubiquitinated on Lys-788 via 'Lys-48'-linked ubiquitin. 'Lys-48'-linked deubiquitinated by USP50 on the Lys-788; leading to its stabilization. Expressed in heart, kidney and forebrain. In testis, expression is restricted to Leydig cells. In heart, expressed in endothelial cells from small and large arteries, arterial smooth muscle cells, and myocytes (at protein level). Ubiquitously expressed, with highest levels in ileum, bladder and lung.

It localises to the secreted. It is found in the cell membrane. The protein resides in the cytoplasm. The protein localises to the cell projection. Its subcellular location is the cilium. It localises to the apical cell membrane. The enzyme catalyses angiotensin II + H2O = angiotensin-(1-7) + L-phenylalanine. It catalyses the reaction angiotensin I + H2O = angiotensin-(1-9) + L-leucine. It carries out the reaction bradykinin(1-8) + H2O = bradykinin(1-7) + L-phenylalanine. The catalysed reaction is neurotensin + H2O = neurotensin-(1-12) + L-leucine. The enzyme catalyses kinetensin + H2O = kinetensin-(1-8) + L-leucine. It catalyses the reaction dynorphin A-(1-13) + H2O = dynorphin A-(1-12) + L-lysine. It carries out the reaction apelin-13 + H2O = apelin-12 + L-phenylalanine. The catalysed reaction is [Pyr1]apelin-13 + H2O = [Pyr1]apelin-12 + L-phenylalanine. The enzyme catalyses apelin-17 + H2O = apelin-16 + L-phenylalanine. With respect to regulation, activated by chloride and fluoride, but not bromide. Inhibited by MLN-4760, cFP_Leu, and EDTA, but not by the ACE inhibitors linosipril, captopril, enalaprilat. Its function is as follows. Essential counter-regulatory carboxypeptidase of the renin-angiotensin hormone system that is a critical regulator of blood volume, systemic vascular resistance, and thus cardiovascular homeostasis. Converts angiotensin I to angiotensin 1-9, a nine-amino acid peptide with anti-hypertrophic effects in cardiomyocytes, and angiotensin II to angiotensin 1-7, which then acts as a beneficial vasodilator and anti-proliferation agent, counterbalancing the actions of the vasoconstrictor angiotensin II. Also removes the C-terminal residue from three other vasoactive peptides, neurotensin, kinetensin, and des-Arg bradykinin, but is not active on bradykinin. Also cleaves other biological peptides, such as apelins, casomorphins and dynorphin A. Plays an important role in amino acid transport by acting as binding partner of amino acid transporter SLC6A19 in intestine, regulating trafficking, expression on the cell surface, and its catalytic activity. In Rattus norvegicus (Rat), this protein is Angiotensin-converting enzyme 2 (Ace2).